Reading from the N-terminus, the 359-residue chain is Peptide chain release factor 1 (359 aa).

Gln235 bears the N5-methylglutamine mark. Residues 280 to 306 are disordered; it reads AERQRADSERSADRKSQVGSGDRSERI.

Belongs to the prokaryotic/mitochondrial release factor family. Post-translationally, methylated by PrmC. Methylation increases the termination efficiency of RF1.

The protein localises to the cytoplasm. Functionally, peptide chain release factor 1 directs the termination of translation in response to the peptide chain termination codons UAG and UAA. The sequence is that of Peptide chain release factor 1 from Rhizobium leguminosarum bv. trifolii (strain WSM2304).